The primary structure comprises 403 residues: Leu/Ile/Val-binding protein homolog 8 (403 aa).

The first 26 residues, 1 to 26 (MRLSRLLIGASLGVALSSTVFTAALA), serve as a signal peptide directing secretion.

Belongs to the leucine-binding protein family.

Component of an amino-acid transport system. This Brucella melitensis biotype 1 (strain ATCC 23456 / CCUG 17765 / NCTC 10094 / 16M) protein is Leu/Ile/Val-binding protein homolog 8.